The chain runs to 81 residues: Putative defensin-like protein 52 (81 aa).

The first 20 residues, 1 to 20 (MTFFLVIILAISSSNYNVLA), serve as a signal peptide directing secretion. Intrachain disulfides connect cysteine 31-cysteine 55 and cysteine 41-cysteine 64.

The protein belongs to the DEFL family.

The protein resides in the secreted. The sequence is that of Putative defensin-like protein 52 from Arabidopsis thaliana (Mouse-ear cress).